Consider the following 617-residue polypeptide: V-type proton ATPase catalytic subunit A (617 aa).

257 to 264 (GAFGCGKT) provides a ligand contact to ATP.

This sequence belongs to the ATPase alpha/beta chains family. As to quaternary structure, V-ATPase is a heteromultimeric enzyme composed of a peripheral catalytic V1 complex (components A to H) attached to an integral membrane V0 proton pore complex (components: a, c, c', c'', d, e, f and VOA1).

It is found in the vacuole membrane. The catalysed reaction is ATP + H2O + 4 H(+)(in) = ADP + phosphate + 5 H(+)(out). Catalytic subunit of the V1 complex of vacuolar(H+)-ATPase (V-ATPase), a multisubunit enzyme composed of a peripheral complex (V1) that hydrolyzes ATP and a membrane integral complex (V0) that translocates protons. V-ATPase is responsible for acidifying and maintaining the pH of intracellular compartments. The sequence is that of V-type proton ATPase catalytic subunit A (VMA1) from Eremothecium gossypii (strain ATCC 10895 / CBS 109.51 / FGSC 9923 / NRRL Y-1056) (Yeast).